Consider the following 408-residue polypeptide: Zinc-regulated transporter 1 (408 aa).

A run of 3 helical transmembrane segments spans residues 64–84 (IGAI…PLVL), 101–121 (LFAR…HLLA), and 141–161 (WAPG…VLLN). T234 and T237 each carry phosphothreonine. 5 consecutive transmembrane segments (helical) span residues 254–274 (FIIL…TTAV), 279–299 (FKTL…GLGS), 315–335 (WVLG…GLGV), 351–371 (GVLD…ELLA), and 387–407 (LIYL…LGKW).

Belongs to the ZIP transporter (TC 2.A.5) family.

It localises to the endoplasmic reticulum membrane. Its function is as follows. High-affinity zinc transport protein. Regulates intracellular zinc levels. In Schizosaccharomyces pombe (strain 972 / ATCC 24843) (Fission yeast), this protein is Zinc-regulated transporter 1 (zrt1).